Consider the following 74-residue polypeptide: Protein kish-B (74 aa).

The signal sequence occupies residues 1 to 22 (MTNVYSFDGILVFGLLFICTCA). Residues 23–52 (YLKKVPRLNSWLLSEKKGVWGVFYKAAVIG) lie on the Extracellular side of the membrane. Residues 53–73 (TRLHVVVAASCLCMAFYLIFL) form a helical membrane-spanning segment. Residue lysine 74 is a topological domain, cytoplasmic.

It belongs to the KISH family.

The protein localises to the golgi apparatus membrane. Functionally, involved in the early part of the secretory pathway. In Danio rerio (Zebrafish), this protein is Protein kish-B (tmem167b).